The following is a 461-amino-acid chain: Putative aldehyde dehydrogenase FUS7 (461 aa).

220–225 (GSTTTG) is a binding site for NAD(+). Catalysis depends on residues glutamate 242 and cysteine 276.

The protein belongs to the aldehyde dehydrogenase family.

It catalyses the reaction an aldehyde + NAD(+) + H2O = a carboxylate + NADH + 2 H(+). In terms of biological role, putative aldehyde dehydrogenase; part of the gene cluster that mediates the biosynthesis of the mycotoxin fusarin C. Within the cluster, FUS1, FUS2, FUS8 and FUS9 are sufficient for fusarin production. The other FUS cluster members are not essential for fusarin C biosynthesis. The protein is Putative aldehyde dehydrogenase FUS7 of Gibberella fujikuroi (strain CBS 195.34 / IMI 58289 / NRRL A-6831) (Bakanae and foot rot disease fungus).